The sequence spans 349 residues: uncharacterized protein (349 aa).

Helical transmembrane passes span 15–35 (VHSP…NPVT), 53–73 (ISFC…MILI), 91–111 (WFLL…LMFS), 120–140 (NVVL…ILLL), 147–167 (LSMV…FWGV), 179–199 (FGLG…TTIL), 218–238 (LLGT…DHFM), 248–268 (WMLI…LAGL), 276–296 (INLA…LILL), and 302–322 (AQYL…IDNL). EamA domains follow at residues 39-164 (IELG…VTVF) and 191-319 (FISA…LSFI).

Belongs to the EamA transporter family.

The protein resides in the cell membrane. This is an uncharacterized protein from Synechocystis sp. (strain ATCC 27184 / PCC 6803 / Kazusa).